An 87-amino-acid chain; its full sequence is Cell division protein FtsL (87 aa).

Residues Met-1 to Phe-6 are Cytoplasmic-facing. The helical transmembrane segment at Phe-7–Gln-23 threads the bilayer. Topologically, residues Asn-24–Arg-87 are periplasmic. Positions Thr-31–Asn-71 form a coiled coil. A disordered region spans residues Glu-68–Arg-87.

It belongs to the FtsL family. As to quaternary structure, part of a complex composed of FtsB, FtsL and FtsQ.

The protein resides in the cell inner membrane. Essential cell division protein. May link together the upstream cell division proteins, which are predominantly cytoplasmic, with the downstream cell division proteins, which are predominantly periplasmic. The protein is Cell division protein FtsL of Neisseria gonorrhoeae (strain ATCC 700825 / FA 1090).